Reading from the N-terminus, the 368-residue chain is Ferrochelatase (368 aa).

Fe cation-binding residues include His-209 and Glu-290. The tract at residues 341–368 is disordered; it reads ADLGGGREATGQAAERSRQRALALGAKQ.

This sequence belongs to the ferrochelatase family.

It is found in the cytoplasm. It carries out the reaction heme b + 2 H(+) = protoporphyrin IX + Fe(2+). Its pathway is porphyrin-containing compound metabolism; protoheme biosynthesis; protoheme from protoporphyrin-IX: step 1/1. Functionally, catalyzes the ferrous insertion into protoporphyrin IX. This is Ferrochelatase from Nitrosococcus oceani (strain ATCC 19707 / BCRC 17464 / JCM 30415 / NCIMB 11848 / C-107).